The following is a 480-amino-acid chain: Pre-glycoprotein polyprotein GP complex (480 aa).

G2 carries the N-myristoyl glycine; by host lipid modification. At 2–17 the chain is on the extracellular side; the sequence is GQLVSFFQEIPVFFQE. The helical transmembrane segment at 18-33 threads the bilayer; the sequence is ALNIALAVVTLLAIVK. Topologically, residues 34–58 are cytoplasmic; the sequence is GVLNLWKSGLFQLLMFLILAGRSCS. C57 contributes to the Zn(2+) binding site. The Extracellular segment spans residues 59-419; the sequence is FRIGYHTSFE…QGRTPLTLVD (361 aa). 4 disulfide bridges follow: C85-C221, C266-C279, C288-C297, and C351-C372. N-linked (GlcNAc...) asparagine; by host glycosylation is found at N88, N174, and N214. N352, N360, N377, and N382 each carry an N-linked (GlcNAc...) asparagine; by host glycan. A helical membrane pass occupies residues 420 to 440; it reads LCFWSAVFYTTTLFLHLVGFP. At 441-480 the chain is on the cytoplasmic side; it reads THRHISGEPCPLPHRLNRHGACNCGRFKRLKKPLVWYKHH. Residues H442, H444, C450, H454, C462, C464, and H480 each coordinate Zn(2+).

It belongs to the arenaviridae GPC protein family. Interacts with glycoprotein G2. Part of the GP complex (GP-C) together with glycoprotein G1 and glycoprotein G2. The GP-complex interacts with protein Z, which interacts with ribonucleocapsid; these interactions may induce virion budding. As to quaternary structure, homotrimer; disulfide-linked. In pre-fusion state, G1 homotrimers bind G2 homotrimers via ionic interactions. Part of the GP complex (GP-C) together with glycoprotein G2 and the stable signal peptide. The GP-complex interacts with protein Z, which interacts with ribonucleocapsid; these interactions may induce virion budding. In terms of assembly, homotrimer. Interacts with the stable signal peptide. In pre-fusion state, G2 homotrimers bind G1 homotrimers via ionic interactions. Part of the GP complex (GP-C) together with glycoprotein G1 and the stable signal peptide. Acidification in the endosome triggers rearrangements, which ultimately leads to a 6 helix bundle formed by the two heptad repeat domains (HR1 and HR2) in post-fusion state. The GP-complex interacts with protein Z, which interacts with ribonucleocapsid; these interactions may induce virion budding. In terms of processing, specific enzymatic cleavages in vivo yield mature proteins. GP-C polyprotein is cleaved in the endoplasmic reticulum by the host protease MBTPS1. Only cleaved glycoprotein is incorporated into virions. Post-translationally, the SSP remains stably associated with the GP complex following cleavage by signal peptidase and plays crucial roles in the trafficking of GP through the secretory pathway. Myristoylation is necessary for GP2-mediated fusion activity.

It is found in the virion membrane. The protein localises to the host endoplasmic reticulum membrane. The protein resides in the host Golgi apparatus membrane. Its subcellular location is the host cell membrane. Functionally, functions as a cleaved signal peptide that is retained as the third component of the GP complex (GP-C). Helps to stabilize the spike complex in its native conformation. The SSP is required for efficient glycoprotein expression, post-translational maturation cleavage of G1 and G2, glycoprotein transport to the cell surface plasma membrane, formation of infectious virus particles, and acid pH-dependent glycoprotein-mediated cell fusion. In terms of biological role, forms the virion spikes together with glycoprotein G2. The glycoprotein spike trimers are connected to the underlying matrix. Interacts with the host receptor leading to virus endocytosis. Forms the virion spikes together with glycoprotein G1. The glycoprotein spike trimers are connected to the underlying matrix. Class I viral fusion protein that directs fusion of viral and host endosomal membranes, leading to delivery of the nucleocapsid into the cytoplasm. Membrane fusion is mediated by irreversible conformational changes induced by acidification. This chain is Pre-glycoprotein polyprotein GP complex, found in Cupixi mammarenavirus (isolate Rat/Brasil/BeAn 119303/1970) (CPXV).